The chain runs to 80 residues: Defensin-like protein 44 (80 aa).

The N-terminal stretch at 1 to 27 (MAITKTSVTLLLLIIMAASLSNFSVLA) is a signal peptide. 4 disulfides stabilise this stretch: Cys40–Cys79, Cys44–Cys67, Cys53–Cys77, and Cys57–Cys78.

Belongs to the DEFL family.

It localises to the secreted. This chain is Defensin-like protein 44, found in Arabidopsis thaliana (Mouse-ear cress).